A 1254-amino-acid polypeptide reads, in one-letter code: Receptor tyrosine-protein kinase erbB-2 (1254 aa).

The N-terminal stretch at 1-22 (MELAAWCGWGLLLALLSPGASG) is a signal peptide. Topologically, residues 23 to 652 (TQVCTGTDMK…PAEQRASPAT (630 aa)) are extracellular. C26 and C53 are joined by a disulfide. N68, N125, and N187 each carry an N-linked (GlcNAc...) asparagine glycan. Intrachain disulfides connect C162–C192, C195–C204, C199–C212, C236–C244, C240–C252, C255–C264, C268–C295, C299–C311, C315–C331, C334–C338, C342–C367, C475–C504, C511–C520, and C515–C528. N-linked (GlcNAc...) asparagine glycosylation occurs at N259. N530 carries an N-linked (GlcNAc...) asparagine glycan. Intrachain disulfides connect C531/C540, C544/C560, C563/C576, C567/C584, C587/C596, C600/C623, C626/C634, and C630/C642. A glycan (N-linked (GlcNAc...) asparagine) is linked at N571. N629 is a glycosylation site (N-linked (GlcNAc...) asparagine). A helical transmembrane segment spans residues 653 to 675 (SIIATVVGILLFLVIGVVVGILI). The interval 676-689 (KRRRQKIRKYTMRR) is required for interaction with KPNB1 and EEA1. The Nuclear localization signal motif lies at 676–689 (KRRRQKIRKYTMRR). The Cytoplasmic portion of the chain corresponds to 676 to 1254 (KRRRQKIRKY…PEYLGLDVPV (579 aa)). The 268-residue stretch at 720–987 (LRKVKVLGSG…RMARDPQRFV (268 aa)) folds into the Protein kinase domain. ATP-binding positions include 726 to 734 (LGSGAFGTV) and K753. D845 (proton acceptor) is an active-site residue. Y877 is subject to Phosphotyrosine. Disordered stretches follow at residues 1029 to 1116 (GFFF…SEDP) and 1133 to 1179 (CSPQ…GKNG). A phosphoserine mark is found at S1054, S1078, S1083, and S1107. At Y1112 the chain carries Phosphotyrosine. Y1139 bears the Phosphotyrosine; by autocatalysis mark. A compositionally biased stretch (pro residues) spans 1146–1161 (RPQPPLTPEGPLPPVR). Phosphothreonine is present on T1166. The tract at residues 1195-1197 (EYL) is interaction with PIK3C2B. Position 1196 is a phosphotyrosine (Y1196). A disordered region spans residues 1223 to 1254 (DQDPSERGSPPNTFEGTPTAENPEYLGLDVPV). Polar residues predominate over residues 1232-1242 (PPNTFEGTPTA). A Phosphotyrosine; by autocatalysis modification is found at Y1247.

It belongs to the protein kinase superfamily. Tyr protein kinase family. EGF receptor subfamily. Homodimer. Heterodimer with EGFR, ERBB3 and ERBB4. Part of a complex with EGFR and either PIK3C2A or PIK3C2B. May interact with PIK3C2B when phosphorylated on Tyr-1196. Interacts with PRKCABP and PLXNB1. Interacts (when phosphorylated on Tyr-1247) with MEMO. Interacts with MUC1. Interacts (when phosphorylated on Tyr-1139) with GRB7 (via SH2 domain). Interacts (when phosphorylated on Tyr-1247) with ERBIN. Interacts with SRC, KPNB1, RANBP2, EEA1, CRM1, CLTC, PTK6, RPA194, MYOC and ACTB. Interacts (preferentially with the tyrosine phosphorylated form) with CPNE3; this interaction occurs at the cell membrane and is increased in a growth factor heregulin-dependent manner. Interacts with HSP90AA1 and HSP90AB1 in an ATP-dependent manner; the interaction suppresses ERBB2 kinase activity. Interacts with SORL1; this interaction regulates ERBB2 subcellular distribution by promoting its recycling after internalization from endosomes back to the plasma membrane, hence stimulates ERBB2-mediated signaling. Interacts with SH3BGRL. Interacts with ROR1. Autophosphorylated. Autophosphorylation occurs in trans, i.e. one subunit of the dimeric receptor phosphorylates tyrosine residues on the other subunit. Ligand-binding increases phosphorylation on tyrosine residues. Signaling via SEMA4C promotes phosphorylation at Tyr-1247. Dephosphorylated by PTPN12.

The protein resides in the cell membrane. It is found in the cell projection. The protein localises to the ruffle membrane. Its subcellular location is the early endosome. It localises to the cytoplasm. The protein resides in the perinuclear region. It is found in the nucleus. The enzyme catalyses L-tyrosyl-[protein] + ATP = O-phospho-L-tyrosyl-[protein] + ADP + H(+). Functionally, protein tyrosine kinase that is part of several cell surface receptor complexes, but that apparently needs a coreceptor for ligand binding. Essential component of a neuregulin-receptor complex, although neuregulins do not interact with it alone. GP30 is a potential ligand for this receptor. Regulates outgrowth and stabilization of peripheral microtubules (MTs). Upon ERBB2 activation, the MEMO1-RHOA-DIAPH1 signaling pathway elicits the phosphorylation and thus the inhibition of GSK3B at cell membrane. This prevents the phosphorylation of APC and CLASP2, allowing its association with the cell membrane. In turn, membrane-bound APC allows the localization of MACF1 to the cell membrane, which is required for microtubule capture and stabilization. Its function is as follows. In the nucleus is involved in transcriptional regulation. Associates with the 5'-TCAAATTC-3' sequence in the PTGS2/COX-2 promoter and activates its transcription. Implicated in transcriptional activation of CDKN1A; the function involves STAT3 and SRC. Involved in the transcription of rRNA genes by RNA Pol I and enhances protein synthesis and cell growth. This is Receptor tyrosine-protein kinase erbB-2 (ERBB2) from Mesocricetus auratus (Golden hamster).